Reading from the N-terminus, the 500-residue chain is Melanopsin (500 aa).

Residues 1–65 (MSHHSSWRGH…TVDVPDHAHY (65 aa)) are Extracellular-facing. Asn18 is a glycosylation site (N-linked (GlcNAc...) asparagine). A helical membrane pass occupies residues 66 to 86 (IIGAVILIVGITGVIGNALVI). At 87–101 (YVFCRSRTLRTAGNM) the chain is on the cytoplasmic side. The helical transmembrane segment at 102–122 (FVVNLAVADFFMSLTQSPVFF) threads the bilayer. The Extracellular segment spans residues 123 to 138 (AASLHRRWIFGERICE). An intrachain disulfide couples Cys137 to Cys215. Residues 139-159 (LYAFCGALFGICSMMTLTAIA) traverse the membrane as a helical segment. Over 160 to 182 (ADRCLAITQPLALVGNVSRRKAG) the chain is Cytoplasmic. The chain crosses the membrane as a helical span at residues 183 to 203 (AVLAVVWLYSLGWSLPPFFGW). At 204-232 (SAYVPEGLQTSCSWDYMTFTPSVRAYTIL) the chain is on the extracellular side. The helical transmembrane segment at 233 to 253 (LFIFVFFIPLGIIVSCYVGIF) threads the bilayer. Residues 254–286 (QAIRAMGKEIRELDCGETQKVYERMQNEWKMAK) are Cytoplasmic-facing. Residues 287–307 (IALLVILLFVISWSPYSVVAL) form a helical membrane-spanning segment. Over 308-322 (TATAGYSHLLTPYMN) the chain is Extracellular. A helical transmembrane segment spans residues 323-343 (SVPAVIAKASAIHNPIIYAIT). Lys330 is subject to N6-(retinylidene)lysine. Over 344–500 (HPKYRAAIAR…DGKALLLGGN (157 aa)) the chain is Cytoplasmic. Disordered regions lie at residues 406 to 428 (GKKR…ADGS), 448 to 470 (VILS…AHKV), and 481 to 500 (ETDS…LGGN). 2 stretches are compositionally biased toward polar residues: residues 411 to 428 (SSAS…ADGS) and 448 to 462 (VILS…ASGQ).

The protein belongs to the G-protein coupled receptor 1 family. Opsin subfamily. In terms of tissue distribution, expressed in a subset of retinal horizontal cells as well as in retinal ganglion cells.

It localises to the cell membrane. Photoreceptor implicated in non-image-forming responses to light. This is Melanopsin (opn4) from Rutilus rutilus (Roach).